Consider the following 113-residue polypeptide: U11-theraphotoxin-Hhn1h (113 aa).

Residues 1–21 (MNTVRVTFLLVFVLVVSLGQA) form the signal peptide. Positions 22 to 74 (DKDENRMEMQEKTEQGKSYLDFAENLLLQKLEELEAKLLEEDSEESRNSRQKR) are excised as a propeptide. Positions 61 to 83 (EEDSEESRNSRQKRRIGEGVPCD) are disordered. Cystine bridges form between Cys-82–Cys-95 and Cys-89–Cys-110.

This sequence belongs to the neurotoxin 14 (magi-1) family. 01 (HNTX-16) subfamily. As to expression, expressed by the venom gland.

Its subcellular location is the secreted. In terms of biological role, probable ion channel inhibitor. The chain is U11-theraphotoxin-Hhn1h from Cyriopagopus hainanus (Chinese bird spider).